The chain runs to 250 residues: F-box only protein 17 (250 aa).

The region spanning 15–62 is the F-box domain; it reads HMALAELPPELLLQVLSHVPPRALVTRCRPVCRAWRDLVDGPSVWLLQ. The 152-residue stretch at 99–250 folds into the FBA domain; sequence FCLLAPLGRN…GLLQGLSRLH (152 aa).

As to quaternary structure, part of a SCF (SKP1-cullin-F-box) protein ligase complex. Interacts with SKP1 and CUL1.

Substrate-recognition component of the SCF (SKP1-CUL1-F-box protein)-type E3 ubiquitin ligase complex. Able to recognize and bind denatured glycoproteins, which are modified with complex-type oligosaccharides. Also recognizes sulfated glycans. Does not bind high-mannose glycoproteins. The protein is F-box only protein 17 (Fbxo17) of Rattus norvegicus (Rat).